The sequence spans 445 residues: MWLLAAHQVLRKMQRRHSSNTDNIPPERSRSQALSPEASVDEGGVFESLKAETASPPALFSGLAGGLPASPFPAGLVLGSTAGGGDVFIPMPATRDEAGGRSAEGSTYHHRQAHHHFHHGAHRGGSLLQHVGGDHRGHSEEGVDEQPGTPAPALSELKAVISWLQKGLPFILILLAKLCFQHKLGIAVCIGMASTFAYANSTLREQVSLKEKRSVLVILWILAFLAGNTMYVLYTFSSQQLYSSLIFLKPNLETLDFFDLLWIVGIADFVLKYITIALKCLIVALPKIILAVKSKGKFYLVIEELSQLFRSLVPIQLWYKYIMGDDSSNSYFLGGVLIVLYSLCKSFDICGRVGGLRKALKLLCTSQNYGVRATGQQCTEAGAVCAICQAEFRDPMILLCQHVFCEECLCLWLDRERTCPLCRSVAVDTLRCWKDGATSAHLQVY.

The Extracellular portion of the chain corresponds to 1–183 (MWLLAAHQVL…LLAKLCFQHK (183 aa)). The disordered stretch occupies residues 12–41 (KMQRRHSSNTDNIPPERSRSQALSPEASVD). Residues 184 to 203 (LGIAVCIGMASTFAYANSTL) traverse the membrane as a helical segment. Topologically, residues 204-215 (REQVSLKEKRSV) are cytoplasmic. The helical transmembrane segment at 216-236 (LVILWILAFLAGNTMYVLYTF) threads the bilayer. The Extracellular segment spans residues 237–256 (SSQQLYSSLIFLKPNLETLD). Residues 257–277 (FFDLLWIVGIADFVLKYITIA) traverse the membrane as a helical segment. Over 278-330 (LKCLIVALPKIILAVKSKGKFYLVIEELSQLFRSLVPIQLWYKYIMGDDSSNS) the chain is Cytoplasmic. The helical transmembrane segment at 331–351 (YFLGGVLIVLYSLCKSFDICG) threads the bilayer. Residues 352–445 (RVGGLRKALK…GATSAHLQVY (94 aa)) lie on the Extracellular side of the membrane. The segment at 385-423 (CAICQAEFRDPMILLCQHVFCEECLCLWLDRERTCPLCR) adopts an RING-type zinc-finger fold.

The protein localises to the membrane. E3 ubiquitin-protein ligase that negatively regulates IL3-dependent cellular responses through IL3RA ubiquitination and degradation by the proteasome, having an anti-inflammatory effect. This is RING finger and transmembrane domain-containing protein 2 (Rnft2) from Mus musculus (Mouse).